The following is a 391-amino-acid chain: MDVRESISLQNQVSMNLAKHVITTVSQNSNVIFSPASINVVLSIIAAGSAGATKDQILSFLKFSSTDQLNSFSSEIVSAVLADGSANGGPKLSVANGAWIDKSLSFKPSFKQLLEDSYKAASNQADFQSKAVEVIAEVNSWAEKETNGLITEVLPEGSADSMTKLIFANALYFKGTWNEKFDESLTQEGEFHLLDGNKVTAPFMTSKKKQYVSAYDGFKVLGLPYLQGQDKRQFSMYFYLPDANNGLSDLLDKIVSTPGFLDNHIPRRQVKVREFKIPKFKFSFGFDASNVLKGLGLTSPFSGEEGLTEMVESPEMGKNLCVSNIFHKACIEVNEEGTEAAAASAGVIKLRGLLMEEDEIDFVADHPFLLVVTENITGVVLFIGQVVDPLH.

An RCL region spans residues 337 to 361; the sequence is GTEAAAASAGVIKLRGLLMEEDEID. The N-linked (GlcNAc...) asparagine glycan is linked to asparagine 375.

It belongs to the serpin family. As to quaternary structure, interacts with RD21A. In terms of tissue distribution, expressed in root tips. Expressed in siliques (at protein level).

Its subcellular location is the secreted. It is found in the extracellular space. It localises to the apoplast. The protein localises to the cytoplasm. In terms of biological role, inhibits metacaspase-9 (MC9) cysteine protease. Functions through cleavage of its reactive center loop and covalent binding to MC9. Involved in the control of elicitor-stimulated programmed cell death (PCD). During infection by the necrotrophic fungal pathogen Botrytis cinerea, functions to protect cells by limiting the PCD-promoting protease RD21A activity that is released from the ER body or vacuole to the cytoplasm. Involved in the control of water stress-induced cell death by limiting the pro-death protease RD21A activity that is released from the vacuole to the cytoplasm. The protein is Serpin-ZX of Arabidopsis thaliana (Mouse-ear cress).